Reading from the N-terminus, the 119-residue chain is Large ribosomal subunit protein bL20 (119 aa).

The protein belongs to the bacterial ribosomal protein bL20 family.

Its function is as follows. Binds directly to 23S ribosomal RNA and is necessary for the in vitro assembly process of the 50S ribosomal subunit. It is not involved in the protein synthesizing functions of that subunit. This Clostridium acetobutylicum (strain ATCC 824 / DSM 792 / JCM 1419 / IAM 19013 / LMG 5710 / NBRC 13948 / NRRL B-527 / VKM B-1787 / 2291 / W) protein is Large ribosomal subunit protein bL20.